The chain runs to 215 residues: Hibernation-associated plasma protein HP-27 (215 aa).

The first 30 residues, 1–30, serve as a signal peptide directing secretion; the sequence is MYEAGKRASFMGGAGIWILALSVLMHVVCS. The segment at 34–79 is disordered; the sequence is GNPESCNVPGPQGPPGMRGPPGTPGKPGPPGWNGFPGLPGPPGPPG. Residues 43-81 form the Collagen-like domain; sequence GPQGPPGMRGPPGTPGKPGPPGWNGFPGLPGPPGPPGMT. Residues 44–63 are compositionally biased toward pro residues; sequence PQGPPGMRGPPGTPGKPGPP. One can recognise a C1q domain in the interval 85–215; sequence HSKGTSAFAV…VFSGFLIHEN (131 aa). Asn155 carries N-linked (GlcNAc...) asparagine glycosylation.

In terms of tissue distribution, plasma; synthesized in the liver.

It is found in the secreted. In terms of biological role, plasma proteins HP-20, HP-25, HP-27 and HP-55 form a 140 kDa complex via disulfide bonds in the plasma and are hibernation specific. This chain is Hibernation-associated plasma protein HP-27, found in Tamias sibiricus (Siberian chipmunk).